A 28-amino-acid polypeptide reads, in one-letter code: RWDVDQCIYYCLNGVVGYSYTECQTMCT.

2 disulfide bridges follow: C7-C27 and C11-C23.

Belongs to the conotoxin L superfamily. Expressed by the venom duct.

It localises to the secreted. In terms of biological role, in vivo, intracranial injection elicits scratching and grooming activity in mice, and causes body and rear limb extension and tail curling immediately upon injection. In Conus cancellatus (Cancellate cone), this protein is Conotoxin as14b.